We begin with the raw amino-acid sequence, 430 residues long: UPF0597 protein Clos_2050 (430 aa).

The protein belongs to the UPF0597 family.

This Alkaliphilus oremlandii (strain OhILAs) (Clostridium oremlandii (strain OhILAs)) protein is UPF0597 protein Clos_2050.